The following is a 493-amino-acid chain: Glutamyl-tRNA(Gln) amidotransferase subunit A (493 aa).

Active-site charge relay system residues include Lys81 and Ser156. Ser180 acts as the Acyl-ester intermediate in catalysis.

This sequence belongs to the amidase family. GatA subfamily. In terms of assembly, heterotrimer of A, B and C subunits.

The enzyme catalyses L-glutamyl-tRNA(Gln) + L-glutamine + ATP + H2O = L-glutaminyl-tRNA(Gln) + L-glutamate + ADP + phosphate + H(+). In terms of biological role, allows the formation of correctly charged Gln-tRNA(Gln) through the transamidation of misacylated Glu-tRNA(Gln) in organisms which lack glutaminyl-tRNA synthetase. The reaction takes place in the presence of glutamine and ATP through an activated gamma-phospho-Glu-tRNA(Gln). The chain is Glutamyl-tRNA(Gln) amidotransferase subunit A from Mycolicibacterium paratuberculosis (strain ATCC BAA-968 / K-10) (Mycobacterium paratuberculosis).